Reading from the N-terminus, the 87-residue chain is Small ribosomal subunit protein uS15 (87 aa).

Basic and acidic residues predominate over residues 1-19 (MDKAKKQELMAKHARHEGD). Residues 1-23 (MDKAKKQELMAKHARHEGDTGSP) form a disordered region.

This sequence belongs to the universal ribosomal protein uS15 family. In terms of assembly, part of the 30S ribosomal subunit. Forms a bridge to the 50S subunit in the 70S ribosome, contacting the 23S rRNA.

In terms of biological role, one of the primary rRNA binding proteins, it binds directly to 16S rRNA where it helps nucleate assembly of the platform of the 30S subunit by binding and bridging several RNA helices of the 16S rRNA. Its function is as follows. Forms an intersubunit bridge (bridge B4) with the 23S rRNA of the 50S subunit in the ribosome. The polypeptide is Small ribosomal subunit protein uS15 (Clostridium botulinum (strain Loch Maree / Type A3)).